The following is a 146-amino-acid chain: Hemoglobin subunit beta (146 aa).

V1 bears the N-acetylvaline mark. In terms of domain architecture, Globin spans 2-146 (ELTAEEKAAV…VANALAHKYH (145 aa)). S44 is modified (phosphoserine). At K59 the chain carries N6-acetyllysine. Heme b is bound at residue H63. K82 carries the post-translational modification N6-acetyllysine. H92 provides a ligand contact to heme b. S-nitrosocysteine is present on C93. K144 is modified (N6-acetyllysine).

The protein belongs to the globin family. Heterotetramer of two alpha chains and two beta chains. Red blood cells.

Involved in oxygen transport from the lung to the various peripheral tissues. The protein is Hemoglobin subunit beta (HBB) of Ceratotherium simum (White rhinoceros).